The following is a 206-amino-acid chain: KH domain-containing protein 3 (206 aa).

The interval 1 to 40 is involved in RNA binding; the sequence is MDTPRRFPTLVQLMQPKAMPVEVLGHLPKRFSWFHSEFLK. One can recognise a KH; atypical domain in the interval 40 to 103; sequence KNPKVVRLEV…SYQEDTIKMI (64 aa). Residues 144 to 153 are compositionally biased toward basic and acidic residues; the sequence is GTQRSVEVRE. A disordered region spans residues 144 to 206; it reads GTQRSVEVRE…EDTRAPVTRL (63 aa). At T145 the chain carries Phosphothreonine. Positions 166–183 are enriched in polar residues; it reads TGTQQSLEAANQSGTQRS. A Phosphoserine modification is found at S171.

The protein belongs to the KHDC1 family. Component of the subcortical maternal complex (SCMC), at least composed of NLRP5, KHDC3L, OOEP, and TLE6. Within the complex, interacts with NLRP5, KHDC3L and TLE6. The SCMC may facilitate translocation of its components between the nuclear and cytoplasmic compartments. Forms a scaffold complex with OOEP/FLOPED, and interacts with BLM and TRIM25 at DNA replication forks. Interacts with PARP1; the interaction is increased following the formation of DNA double-strand breaks. Interacts with NUMA1.

It localises to the cytoplasm. The protein localises to the cell cortex. It is found in the nucleus. Its subcellular location is the mitochondrion. The protein resides in the cytoskeleton. It localises to the microtubule organizing center. The protein localises to the centrosome. It is found in the chromosome. Functionally, component of the subcortical maternal complex (SCMC), a multiprotein complex that plays a key role in early embryonic development. The SCMC complex is a structural constituent of cytoplasmic lattices, which consist in fibrous structures found in the cytoplasm of oocytes and preimplantation embryos. They are required to store maternal proteins critical for embryonic development, such as proteins that control epigenetic reprogramming of the preimplantation embryo, and prevent their degradation or activation. KHDC3 ensures proper spindle assembly by regulating the localization of AURKA via RHOA signaling and of PLK1 via a RHOA-independent process. Required for the localization of MAD2L1 to kinetochores to enable spindle assembly checkpoint function. As part of the OOEP-KHDC3 scaffold, recruits BLM and TRIM25 to DNA replication forks, thereby promoting the ubiquitination of BLM by TRIM25, enhancing BLM retainment at replication forks and therefore promoting stalled replication fork restart. Regulates homologous recombination-mediated DNA repair via recruitment of RAD51 to sites of DNA double-strand breaks, and sustainment of PARP1 activity, which in turn modulates downstream ATM or ATR activation. Activation of ATM or ATR in response to DNA double-strand breaks may be cell-type specific. Its role in DNA double-strand break repair is independent of its role in restarting stalled replication forks. Promotes neural stem cell neurogenesis and neuronal differentiation in the hippocampus. May regulate normal development of learning, memory and anxiety. Capable of binding RNA. The polypeptide is KH domain-containing protein 3 (KHDC3L) (Macaca mulatta (Rhesus macaque)).